The chain runs to 488 residues: Tripartite motif-containing protein 6 (488 aa).

An RING-type zinc finger spans residues 15–60; it reads CPICLELLTEPLSIDCGHSFCQVCIIGNSNNSVFGQGGRSSCPVCR. A B box-type zinc finger spans residues 92–133; sequence LEVIFCALHGEKLQLFCKEDGKLICWLCERSQEHRGHHTFLM. Cys-97, His-100, Cys-119, and His-125 together coordinate Zn(2+). Residues 132 to 223 are a coiled coil; sequence LMEEVAQEYQ…SIIEKAEGDL (92 aa). The region spanning 282–488 is the B30.2/SPRY domain; sequence DLRKMLKVFR…VPMTLRRPTS (207 aa).

This sequence belongs to the TRIM/RBCC family. In terms of assembly, homotrimer. Forms heteromultimers (via B30.2/SPRY domain) with TRIM5. Interacts with MYC. Interacts (via SPRY domain) with IKBKE. Interacts with VAMP8; this interaction contributes to the activation of the type I interferon antiviral response. Interacts with DHX16.

The protein localises to the cytoplasm. The enzyme catalyses S-ubiquitinyl-[E2 ubiquitin-conjugating enzyme]-L-cysteine + [acceptor protein]-L-lysine = [E2 ubiquitin-conjugating enzyme]-L-cysteine + N(6)-ubiquitinyl-[acceptor protein]-L-lysine.. It participates in protein modification; protein ubiquitination. In terms of biological role, E3 ubiquitin ligase that plays a crucial role in the activation of the IKBKE-dependent branch of the type I interferon signaling pathway. In concert with the ubiquitin-conjugating E2 enzyme UBE2K, synthesizes unanchored 'Lys-48'-linked polyubiquitin chains that promote the oligomerization and autophosphorylation of IKBKE leading to stimulation of an antiviral response. Also ubiquitinates MYC and inhibits its transcription activation activity, maintaining the pluripotency of embryonic stem cells. Promotes the association of unanchored 'Lys-48'-polyubiquitin chains with DHX16 leading to enhancement of RIGI-mediated innate antiviral immune response. In Mus musculus (Mouse), this protein is Tripartite motif-containing protein 6 (Trim6).